A 194-amino-acid chain; its full sequence is Small ribosomal subunit protein uS4 (194 aa).

Lys66 bears the N6-acetyllysine mark. Residue Lys93 forms a Glycyl lysine isopeptide (Lys-Gly) (interchain with G-Cter in SUMO2) linkage. In terms of domain architecture, S4 RNA-binding spans 108–182 (RRLQTQVFKL…VKRKNAKKGQ (75 aa)). Lys116 bears the N6-acetyllysine mark. Lys139 is covalently cross-linked (Glycyl lysine isopeptide (Lys-Gly) (interchain with G-Cter in SUMO2)). Ser153 is modified (phosphoserine). An N6-acetyllysine modification is found at Lys155. The disordered stretch occupies residues 162–194 (RSPYGGGRPGRVKRKNAKKGQGGAGAGDDEEED). Position 163 is a phosphoserine (Ser163).

It belongs to the universal ribosomal protein uS4 family. Component of the small ribosomal subunit. Part of the small subunit (SSU) processome, composed of more than 70 proteins and the RNA chaperone small nucleolar RNA (snoRNA) U3.

The protein localises to the cytoplasm. It localises to the nucleus. The protein resides in the nucleolus. In terms of biological role, component of the small ribosomal subunit. The ribosome is a large ribonucleoprotein complex responsible for the synthesis of proteins in the cell. Part of the small subunit (SSU) processome, first precursor of the small eukaryotic ribosomal subunit. During the assembly of the SSU processome in the nucleolus, many ribosome biogenesis factors, an RNA chaperone and ribosomal proteins associate with the nascent pre-rRNA and work in concert to generate RNA folding, modifications, rearrangements and cleavage as well as targeted degradation of pre-ribosomal RNA by the RNA exosome. In Papio anubis (Olive baboon), this protein is Small ribosomal subunit protein uS4 (RPS9).